Here is a 408-residue protein sequence, read N- to C-terminus: MPGHLQEGFGCVVTNRFDQLFDDESDPFEVLKAAENKKKEAGGGGVGGPGAKSAAQAAAQTNSNAAGKQLRKESQKDRKNPLPPSVGVVDKKEETQPPVALKKEGIRRVGRRPDQQLQGEGKIIDRRPERRPPRERRFEKPLEEKGEGGEFSVDRPIIDRPIRGRGGLGRGRGGRGRGMGRGDGFDSRGKREFDRHSGSDRSSFSHYSGLKHEDKRGGSGSHNWGTVKDELTESPKYIQKQISYNYSDLDQSNVTEETPEGEEHHPVADTENKENEVEEVKEEGPKEMTLDEWKAIQNKDRAKVEFNIRKPNEGADGQWKKGFVLHKSKSEEAHAEDSVMDHHFRKPANDITSQLEINFGDLGRPGRGGRGGRGGRGRGGRPNRGSRTDKSSASAPDVDDPEAFPALA.

Ser25 is subject to Phosphoserine. Disordered stretches follow at residues 33–292 (AAEN…TLDE) and 328–408 (SKSE…PALA). Residues 51-68 (AKSAAQAAAQTNSNAAGK) are compositionally biased toward low complexity. Lys52 carries the N6-acetyllysine; alternate modification. A Glycyl lysine isopeptide (Lys-Gly) (interchain with G-Cter in SUMO1); alternate cross-link involves residue Lys52. Lys68 carries the post-translational modification N6-acetyllysine. 3 stretches are compositionally biased toward basic and acidic residues: residues 70–80 (LRKESQKDRKN), 89–114 (VDKKEETQPPVALKKEGIRRVGRRPD), and 122–162 (KIID…DRPI). Lys102 participates in a covalent cross-link: Glycyl lysine isopeptide (Lys-Gly) (interchain with G-Cter in SUMO1); alternate. A Glycyl lysine isopeptide (Lys-Gly) (interchain with G-Cter in SUMO2); alternate cross-link involves residue Lys102. 2 positions are modified to N6-acetyllysine: Lys122 and Lys140. The segment covering 164-182 (GRGGLGRGRGGRGRGMGRG) has biased composition (gly residues). An omega-N-methylarginine mark is found at Arg165 and Arg188. Positions 183 to 199 (DGFDSRGKREFDRHSGS) are enriched in basic and acidic residues. Position 197 is a phosphoserine (Ser197). Ser199 is subject to Phosphoserine; by MTOR. Ser203, Ser205, and Ser208 each carry phosphoserine. Lys211 is modified (N6-acetyllysine; alternate). Lys211 is covalently cross-linked (Glycyl lysine isopeptide (Lys-Gly) (interchain with G-Cter in SUMO2); alternate). At Arg216 the chain carries Omega-N-methylarginine. Ser221 carries the phosphoserine modification. His222 participates in a covalent cross-link: Glycyl lysine isopeptide (Lys-Gly) (interchain with G-Cter in SUMO2). The residue at position 226 (Thr226) is a Phosphothreonine; by MTOR. Residue Lys228 forms a Glycyl lysine isopeptide (Lys-Gly) (interchain with G-Cter in SUMO1); alternate linkage. Residue Lys228 forms a Glycyl lysine isopeptide (Lys-Gly) (interchain with G-Cter in SUMO2); alternate linkage. Lys228 is covalently cross-linked (Glycyl lysine isopeptide (Lys-Gly) (interchain with G-Cter in SUMO2)). Phosphoserine occurs at positions 231, 234, and 237. Ser234 carries the post-translational modification Phosphothreonine. Lys240 carries the phosphothreonine modification. Positions 240-253 (KQISYNYSDLDQSN) are enriched in polar residues. The span at 261–275 (GEEHHPVADTENKEN) shows a compositional bias: basic and acidic residues. Lys281 is covalently cross-linked (Glycyl lysine isopeptide (Lys-Gly) (interchain with G-Cter in SUMO1); alternate). Lys281 participates in a covalent cross-link: Glycyl lysine isopeptide (Lys-Gly) (interchain with G-Cter in SUMO2); alternate. Composition is skewed to basic and acidic residues over residues 282–292 (EEGPKEMTLDE) and 328–342 (SKSEEAHAEDSVMDH). At Lys329 the chain carries N6-acetyllysine. Position 330 is a phosphoserine (Ser330). The span at 363–372 (GRPGRGGRGG) shows a compositional bias: gly residues. Residues Arg364, Arg367, and Arg370 each carry the omega-N-methylarginine modification. Phosphoserine occurs at positions 392 and 394.

It belongs to the SERBP1-HABP4 family. As to quaternary structure, associates with mature 80S ribosomes. Interacts with EEF2/eEF2; interaction sequesters EEF2/eEF2 at the A-site of the ribosome, thereby blocking the interaction sites of the mRNA-tRNA complex, promoting ribosome stabilization and hibernation. Interacts with SPIN1. Interacts with CHD3 and TDRD3. Interacts with ZDHHC17 (via ANK repeats). In terms of processing, phosphorylation by MTOR inhibits SERBP1 and relieves ribosome hibernation. Expressed at high level in the heart, skeletal muscle and kidney, and at low levels in placenta, liver and brain.

It is found in the cytoplasm. It localises to the nucleus. The protein localises to the perinuclear region. Functionally, ribosome-binding protein that promotes ribosome hibernation, a process during which ribosomes are stabilized in an inactive state and preserved from proteasomal degradation. Acts via its association with EEF2/eEF2 factor, sequestering EEF2/eEF2 at the A-site of the ribosome and promoting ribosome stabilization and storage in an inactive state. May also play a role in the regulation of mRNA stability: binds to the 3'-most 134 nt of the SERPINE1/PAI1 mRNA, a region which confers cyclic nucleotide regulation of message decay. Seems to play a role in PML-nuclear bodies formation. This is SERPINE1 mRNA-binding protein 1 from Homo sapiens (Human).